The chain runs to 437 residues: GTPase Obg (437 aa).

Positions 2 to 160 constitute an Obg domain; that stretch reads SMFLDTAKIS…RQLELELKIL (159 aa). The OBG-type G domain maps to 161-338; the sequence is ADVGLVGFPS…LLEATAELLA (178 aa). GTP contacts are provided by residues 167 to 174, 192 to 196, 214 to 217, 284 to 287, and 319 to 321; these read GFPSVGKS, FTTIV, DLPG, NKMD, and SSL. Ser174 and Thr194 together coordinate Mg(2+). Positions 359–437 constitute an OCT domain; it reads GFAETEKDFE…IGKFEFEFVD (79 aa).

It belongs to the TRAFAC class OBG-HflX-like GTPase superfamily. OBG GTPase family. Monomer. Requires Mg(2+) as cofactor.

Its subcellular location is the cytoplasm. Functionally, an essential GTPase which binds GTP, GDP and possibly (p)ppGpp with moderate affinity, with high nucleotide exchange rates and a fairly low GTP hydrolysis rate. Plays a role in control of the cell cycle, stress response, ribosome biogenesis and in those bacteria that undergo differentiation, in morphogenesis control. The polypeptide is GTPase Obg (Streptococcus pyogenes serotype M5 (strain Manfredo)).